The following is a 452-amino-acid chain: Pup--protein ligase (452 aa).

E9 provides a ligand contact to Mg(2+). Position 53 (R53) interacts with ATP. Position 55 (Y55) interacts with Mg(2+). The active-site Proton acceptor is D57. E63 lines the Mg(2+) pocket. ATP-binding residues include T66 and W419.

Belongs to the Pup ligase/Pup deamidase family. Pup-conjugating enzyme subfamily.

The enzyme catalyses ATP + [prokaryotic ubiquitin-like protein]-L-glutamate + [protein]-L-lysine = ADP + phosphate + N(6)-([prokaryotic ubiquitin-like protein]-gamma-L-glutamyl)-[protein]-L-lysine.. It participates in protein degradation; proteasomal Pup-dependent pathway. Its pathway is protein modification; protein pupylation. Functionally, catalyzes the covalent attachment of the prokaryotic ubiquitin-like protein modifier Pup to the proteasomal substrate proteins, thereby targeting them for proteasomal degradation. This tagging system is termed pupylation. The ligation reaction involves the side-chain carboxylate of the C-terminal glutamate of Pup and the side-chain amino group of a substrate lysine. The sequence is that of Pup--protein ligase from Acidothermus cellulolyticus (strain ATCC 43068 / DSM 8971 / 11B).